We begin with the raw amino-acid sequence, 229 residues long: 2-C-methyl-D-erythritol 4-phosphate cytidylyltransferase (229 aa).

The protein belongs to the IspD/TarI cytidylyltransferase family. IspD subfamily.

The catalysed reaction is 2-C-methyl-D-erythritol 4-phosphate + CTP + H(+) = 4-CDP-2-C-methyl-D-erythritol + diphosphate. Its pathway is isoprenoid biosynthesis; isopentenyl diphosphate biosynthesis via DXP pathway; isopentenyl diphosphate from 1-deoxy-D-xylulose 5-phosphate: step 2/6. Its function is as follows. Catalyzes the formation of 4-diphosphocytidyl-2-C-methyl-D-erythritol from CTP and 2-C-methyl-D-erythritol 4-phosphate (MEP). This Neisseria meningitidis serogroup A / serotype 4A (strain DSM 15465 / Z2491) protein is 2-C-methyl-D-erythritol 4-phosphate cytidylyltransferase.